Consider the following 472-residue polypeptide: ESX-3 secretion system protein EccD3 (472 aa).

11 consecutive transmembrane segments (helical) span residues Trp121–Ala141, Leu155–Ile175, Gly183–Pro203, Val211–Ala231, Val236–Ala256, Leu258–Val278, Gln327–Val347, Pro349–Leu369, Ala381–Thr401, Val405–Ala425, and Gly450–Leu470.

Belongs to the EccD/Snm4 family. As to quaternary structure, part of the ESX-3 / type VII secretion system (T7SS), which is composed of cytosolic and membrane components. The ESX-3 membrane complex is composed of EccB3, EccC3, EccD3 and EccE3.

The protein resides in the cell inner membrane. In terms of biological role, part of the ESX-3 specialized secretion system, which is important for iron and zinc uptake or homeostasis. This chain is ESX-3 secretion system protein EccD3, found in Mycobacterium tuberculosis (strain CDC 1551 / Oshkosh).